The sequence spans 164 residues: Glutaredoxin-2, mitochondrial (164 aa).

The transit peptide at 1-19 directs the protein to the mitochondrion; that stretch reads MIWRRAALAGTRLVWSRSG. Phosphoserine is present on S20. Residues 57-157 enclose the Glutaredoxin domain; that stretch reads VNQIQETISD…PLVHQCYLKK (101 aa). C68 provides a ligand contact to [2Fe-2S] cluster. Residue K74 coordinates glutathione. C77 is modified (S-glutathionyl cysteine; alternate). A disulfide bridge links C77 with C80. The glutathione site is built by Q109 and V121. C153 lines the [2Fe-2S] cluster pocket.

This sequence belongs to the glutaredoxin family. Monomer; active form. Homodimer; inactive form. The homodimer is probably linked by 1 2Fe-2S cluster. As to expression, widely expressed. Expressed in brain, heart, skeletal muscle, colon, thymus, spleen, kidney, liver, small intestine, placenta and lung. Not expressed in peripheral blood leukocytes.

It is found in the mitochondrion. It localises to the nucleus. With respect to regulation, the 2Fe-2S present in the homodimer leads to inactivation of the enzyme. The 2Fe-2S may serve as a redox sensor: the presence of one-electron oxidants or reductants leading to the loss of the 2Fe-2S cluster, subsequent monomerization and activation of the enzyme. Unlike other glutaredoxins, it is not inhibited by oxidation of structural Cys residues. Glutathione-dependent oxidoreductase that facilitates the maintenance of mitochondrial redox homeostasis upon induction of apoptosis by oxidative stress. Involved in response to hydrogen peroxide and regulation of apoptosis caused by oxidative stress. Acts as a very efficient catalyst of monothiol reactions because of its high affinity for protein glutathione-mixed disulfides. Can receive electrons not only from glutathione (GSH), but also from thioredoxin reductase supporting both monothiol and dithiol reactions. Efficiently catalyzes both glutathionylation and deglutathionylation of mitochondrial complex I, which in turn regulates the superoxide production by the complex. Overexpression decreases the susceptibility to apoptosis and prevents loss of cardiolipin and cytochrome c release. This is Glutaredoxin-2, mitochondrial (GLRX2) from Homo sapiens (Human).